The chain runs to 356 residues: Golgi-resident adenosine 3',5'-bisphosphate 3'-phosphatase (356 aa).

At methionine 1 the chain carries N-acetylmethionine. Residues 1-12 lie on the Cytoplasmic side of the membrane; that stretch reads MAPMGIRLSPLG. Residues 13-33 traverse the membrane as a helical segment; it reads VAVFFLLGLGVLYHLYSGFLA. Residues 34-356 are Lumenal-facing; it reads GRFSLFGLGG…KLPDLEKSGH (323 aa). A disordered region spans residues 82–104; the sequence is VRESNVLHEKSKGKTREGAEDKM. Aspartate 108 functions as the Proton acceptor in the catalytic mechanism. Glutamate 131, aspartate 172, leucine 174, and aspartate 175 together coordinate Mg(2+). The active-site Proton acceptor is threonine 177. Serine 240 and histidine 243 together coordinate AMP. Residue asparagine 257 is glycosylated (N-linked (GlcNAc...) asparagine). AMP is bound by residues glycine 266 and lysine 270. Aspartate 298 is a binding site for Mg(2+).

It belongs to the inositol monophosphatase superfamily. Mg(2+) is required as a cofactor. Contains N-linked glycan resistant to endoglycosydase H.

The protein resides in the golgi apparatus. It is found in the trans-Golgi network membrane. It carries out the reaction adenosine 3',5'-bisphosphate + H2O = AMP + phosphate. The protein operates within sulfur metabolism. With respect to regulation, strongly inhibited by lithium. In terms of biological role, exhibits 3'-nucleotidase activity toward adenosine 3',5'-bisphosphate (PAP), namely hydrolyzes adenosine 3',5'-bisphosphate into adenosine 5'-monophosphate (AMP) and a phosphate. May play a role in the formation of skeletal elements derived through endochondral ossification, possibly by clearing adenosine 3',5'-bisphosphate produced by Golgi sulfotransferases during glycosaminoglycan sulfation. Has no activity toward 3'-phosphoadenosine 5'-phosphosulfate (PAPS) or inositol phosphate (IP) substrates including I(1)P, I(1,4)P2, I(1,3,4)P3, I(1,4,5)P3 and I(1,3,4,5)P4. The polypeptide is Golgi-resident adenosine 3',5'-bisphosphate 3'-phosphatase (Bpnt2) (Rattus norvegicus (Rat)).